Reading from the N-terminus, the 301-residue chain is GTP cyclohydrolase FolE2 (301 aa).

Belongs to the GTP cyclohydrolase IV family.

It carries out the reaction GTP + H2O = 7,8-dihydroneopterin 3'-triphosphate + formate + H(+). It functions in the pathway cofactor biosynthesis; 7,8-dihydroneopterin triphosphate biosynthesis; 7,8-dihydroneopterin triphosphate from GTP: step 1/1. Converts GTP to 7,8-dihydroneopterin triphosphate. In Pseudomonas syringae pv. syringae (strain B728a), this protein is GTP cyclohydrolase FolE2.